Here is a 430-residue protein sequence, read N- to C-terminus: Pyrroloquinoline quinone-dependent sugar dehydrogenase (430 aa).

The signal sequence occupies residues 1–23 (MARLAPHTLLLALFVFLFGSCTA). N-linked (GlcNAc...) asparagine glycosylation occurs at asparagine 25. Arginine 57 provides a ligand contact to pyrroloquinoline quinone. Residues asparagine 94 and asparagine 147 are each glycosylated (N-linked (GlcNAc...) asparagine). Histidine 153 contributes to the pyrroloquinoline quinone binding site. N-linked (GlcNAc...) asparagine glycosylation is present at asparagine 184. Arginine 220 provides a ligand contact to pyrroloquinoline quinone. Positions 240 and 242 each coordinate Ca(2+). Cysteine 281 and cysteine 316 are joined by a disulfide. The N-linked (GlcNAc...) asparagine glycan is linked to asparagine 306. Histidine 330 is a binding site for pyrroloquinoline quinone. The N-linked (GlcNAc...) asparagine glycan is linked to asparagine 341. Histidine 350 contributes to the pyrroloquinoline quinone binding site. Cysteine 388 and cysteine 392 form a disulfide bridge.

The protein belongs to the sugar dehydrogenase AA12 family. Ca(2+) is required as a cofactor. Requires pyrroloquinoline quinone as cofactor.

It localises to the secreted. Pyrroloquinoline quinone (PPQ)-dependent oxidoreductase that catalyzes the oxidation of various sugars such as L-fucose. The chain is Pyrroloquinoline quinone-dependent sugar dehydrogenase from Hypocrea jecorina (strain QM6a) (Trichoderma reesei).